Consider the following 179-residue polypeptide: Large ribosomal subunit protein uL6 (179 aa).

It belongs to the universal ribosomal protein uL6 family. As to quaternary structure, part of the 50S ribosomal subunit.

In terms of biological role, this protein binds to the 23S rRNA, and is important in its secondary structure. It is located near the subunit interface in the base of the L7/L12 stalk, and near the tRNA binding site of the peptidyltransferase center. In Persephonella marina (strain DSM 14350 / EX-H1), this protein is Large ribosomal subunit protein uL6.